A 356-amino-acid polypeptide reads, in one-letter code: Nucleosome assembly protein 1;4 (356 aa).

A coiled-coil region spans residues 34–88 (VNALKNKLQNLAGQHSDILETLTPQVRKRVDVLRELQSQHDELESHFFEERAALE). A Nuclear export signal motif is present at residues 55–70 (LTPQVRKRVDVLRELQ). The short motif at 230-235 (KKKPKK) is the Nuclear localization signal element. The tract at residues 304–356 (FTGEAAEGDEFEDIEDDDDDDDDDDDEDDEDEEDEDDEEEEKSKKKSSALKVE) is disordered. Over residues 309-343 (AEGDEFEDIEDDDDDDDDDDDEDDEDEEDEDDEEE) the composition is skewed to acidic residues. Residues 347–356 (KKKSSALKVE) are compositionally biased toward basic residues.

It belongs to the nucleosome assembly protein (NAP) family. As to quaternary structure, can form homomeric and heteromeric protein complexes with NAP1;3. Binds histones H2A and H2B in vivo. Also able to bind histones H1 and H4 in vitro. Interacts with CYCB1;1 and with alpha tubulin.

It localises to the nucleus. It is found in the cytoplasm. In terms of biological role, may modulate chromatin structure by regulation of nucleosome assembly/disassembly. Could function together with B-type cyclins in the regulation of microtubule dynamics. The polypeptide is Nucleosome assembly protein 1;4 (NAP1;4) (Nicotiana tabacum (Common tobacco)).